Consider the following 595-residue polypeptide: Aspartate--tRNA(Asp/Asn) ligase (595 aa).

E175 serves as a coordination point for L-aspartate. The tract at residues 199–202 is aspartate; it reads QQYK. 2 residues coordinate L-aspartate: R221 and H454. ATP is bound at residue 221–223; it reads RDE. E488 is a binding site for ATP. R495 lines the L-aspartate pocket. Position 540 to 543 (540 to 543) interacts with ATP; sequence GIDR.

Belongs to the class-II aminoacyl-tRNA synthetase family. Type 1 subfamily. As to quaternary structure, homodimer.

The protein localises to the cytoplasm. It carries out the reaction tRNA(Asx) + L-aspartate + ATP = L-aspartyl-tRNA(Asx) + AMP + diphosphate. Its function is as follows. Aspartyl-tRNA synthetase with relaxed tRNA specificity since it is able to aspartylate not only its cognate tRNA(Asp) but also tRNA(Asn). Reaction proceeds in two steps: L-aspartate is first activated by ATP to form Asp-AMP and then transferred to the acceptor end of tRNA(Asp/Asn). This is Aspartate--tRNA(Asp/Asn) ligase from Rhizobium meliloti (strain 1021) (Ensifer meliloti).